The primary structure comprises 601 residues: MSCPAARKGRQQPGFACEECRRRKARCDRVRPKCGFCTENGMQCVIVEKRQQRGPIKGQLNSMQSQLELPAGIPPVLDDFDIQASGLSEHDMSLVAATSVGTSTEASLILPAALDKLELPASSEAAAAGLPGWPEWLDWQDMNNSSLILPELTASTLTDPLSLDSLNGSPPTMVDSSSKIQMTDLIRAELDQLYFDRVHAFCPIIHRRRYFASLAQDNHTTAQLCLQSAMRALAAAMSANSSHLSEQFYSEARSLLDTHSQTPATPRDKIPLEHIQAWLLLSHYELLRIGVHQAMLTAGRAFRLVQMARLCEIDAPGGDLQLSPVASSSSSISTNTDSSESFVDAEEGRRTFWKKWHVFLHADTMQNSLTRLLPIQVSTRLPAPEANFQNNQPTRTSFLADAMAQTGPSTLSPFAECIIMATLHGRCMTHRRLYATEFEAGTRDFCIRQGWLATAVERRVQMLVPSPAVDSDPMLLFTHMLAYRATVHLSITVQQASWRTVDQQVLAAAYQQRAAQAASEIVRLAKAVPYLSPFKTHPFLPDTLACAATFLSTQTATDGGGDDIQHLLRVLGELQDTHSLARDYLQTLKLQVQGNRQDGWY.

Positions 17–44 (CEECRRRKARCDRVRPKCGFCTENGMQC) form a DNA-binding region, zn(2)-C6 fungal-type.

The protein localises to the nucleus. Functionally, specific transcriptional regulator for the azasperpyranone A biosynthesis cluster B. This is Transcription factor ATEG_07666 from Aspergillus terreus (strain NIH 2624 / FGSC A1156).